We begin with the raw amino-acid sequence, 129 residues long: Large ribosomal subunit protein uL22 (129 aa).

The protein belongs to the universal ribosomal protein uL22 family. In terms of assembly, part of the 50S ribosomal subunit.

In terms of biological role, this protein binds specifically to 23S rRNA; its binding is stimulated by other ribosomal proteins, e.g. L4, L17, and L20. It is important during the early stages of 50S assembly. It makes multiple contacts with different domains of the 23S rRNA in the assembled 50S subunit and ribosome. Functionally, the globular domain of the protein is located near the polypeptide exit tunnel on the outside of the subunit, while an extended beta-hairpin is found that lines the wall of the exit tunnel in the center of the 70S ribosome. This Bartonella quintana (strain Toulouse) (Rochalimaea quintana) protein is Large ribosomal subunit protein uL22.